A 63-amino-acid polypeptide reads, in one-letter code: MKASELREKSVEELNAELLGLLREQFNLRMQHATGQLTQTHQLKLVRRNIARVKTIITSKAGA.

The protein belongs to the universal ribosomal protein uL29 family.

In Shewanella oneidensis (strain ATCC 700550 / JCM 31522 / CIP 106686 / LMG 19005 / NCIMB 14063 / MR-1), this protein is Large ribosomal subunit protein uL29.